The chain runs to 321 residues: Olfactory receptor 5K4 (321 aa).

The Extracellular portion of the chain corresponds to 1 to 25 (MARENHSLAAEFILIGFTNYPELKT). The N-linked (GlcNAc...) asparagine glycan is linked to N5. A helical membrane pass occupies residues 26–46 (LLFVVFSAIYLVTMVGNLGLV). At 47–54 (ALIYVERR) the chain is on the cytoplasmic side. A helical transmembrane segment spans residues 55 to 75 (LLTPMYIFLGNLALMDSCCSC). Residues 76–97 (AVTPKMLENFFSEDRIISLYEC) lie on the Extracellular side of the membrane. An intrachain disulfide couples C97 to C179. The chain crosses the membrane as a helical span at residues 98-118 (MAQFYFLCLAETTDCFLLATM). Topologically, residues 119–139 (AYDRYVAICHPLQYHTMMSKT) are cytoplasmic. A helical transmembrane segment spans residues 140–160 (LCIRMTTGAFKAGNLHSMIHV). Residues 161–205 (GLLLRLTFCRSNKIHHFFCDILPLYRLSCTDPSINELMIYIFSIP) lie on the Extracellular side of the membrane. A helical membrane pass occupies residues 206–226 (IQIFTIATVLISYLCILLTVF). The Cytoplasmic portion of the chain corresponds to 227 to 240 (KMKSKEGRGKAFST). Residues 241–261 (CASHFLSVSIFYICLLMYIGP) traverse the membrane as a helical segment. At 262–268 (SEEGDKD) the chain is on the extracellular side. Residues 269-289 (TPVAIFYAIVIPLLNPFIYSL) form a helical membrane-spanning segment. Topologically, residues 290–321 (RNKEVINVLKKIMRNYNILKQTCSIANLFLIY) are cytoplasmic.

Belongs to the G-protein coupled receptor 1 family.

It localises to the cell membrane. Its function is as follows. Odorant receptor. This chain is Olfactory receptor 5K4 (OR5K4), found in Homo sapiens (Human).